Here is a 403-residue protein sequence, read N- to C-terminus: Dynactin subunit 2 (403 aa).

Positions 1–26 (MADPKYADLPGIARNEPDVYETSDLP) are disordered. Alanine 2 carries the post-translational modification N-acetylalanine. Tyrosine 6 carries the phosphotyrosine modification. At serine 83 the chain carries Phosphoserine. Tyrosine 86 is modified (phosphotyrosine). Residues 100–130 (QQKYQRLLHEVQELTTEVEKIKTTVKESATE) adopt a coiled-coil conformation. Residues threonine 134 and threonine 200 each carry the phosphothreonine modification. The interval 184–204 (TKNSKGTGSGGKTTSGTPPDS) is disordered. Residues 216–248 (EQDKFSQAAKVAELEKRLTELEATVRCDQDAQN) are a coiled coil. Position 322 is a phosphoserine (serine 322).

Belongs to the dynactin subunit 2 family. Subunit of dynactin, a multiprotein complex part of a tripartite complex with dynein and a adapter, such as BICDL1, BICD2 or HOOK3. The dynactin complex is built around ACTR1A/ACTB filament and consists of an actin-related filament composed of a shoulder domain, a pointed end and a barbed end. Its length is defined by its flexible shoulder domain. The soulder is composed of 2 DCTN1 subunits, 4 DCTN2 and 2 DCTN3. The 4 DCNT2 (via N-terminus) bind the ACTR1A filament and act as molecular rulers to determine the length. The pointed end is important for binding dynein-dynactin cargo adapters and consists of 4 subunits: ACTR10, DCNT4, DCTN5 and DCTN6. The barbed end is composed of a CAPZA1:CAPZB heterodimers, which binds ACTR1A/ACTB filament and dynactin and stabilizes dynactin. Interacts with BICD2 and CEP135. Interacts with DYNAP. Interacts with ECPAS. Interacts with MAPRE1.

The protein resides in the cytoplasm. The protein localises to the cytoskeleton. It is found in the microtubule organizing center. It localises to the centrosome. Its subcellular location is the membrane. Its function is as follows. Part of the dynactin complex that activates the molecular motor dynein for ultra-processive transport along microtubules. In the dynactin soulder domain, binds the ACTR1A filament and acts as a molecular ruler to determine the length. Modulates cytoplasmic dynein binding to an organelle, and plays a role in prometaphase chromosome alignment and spindle organization during mitosis. Involved in anchoring microtubules to centrosomes. May play a role in synapse formation during brain development. The polypeptide is Dynactin subunit 2 (DCTN2) (Bos taurus (Bovine)).